The sequence spans 475 residues: MGTATEKLSDATFKVADLSLAEWGRKEISVSEFEMPGLMAIRRKYAKEKPLAGVRITGSLHMTIQTAVLIETLVDLGASVRWASCNIFSTQDHAAAAIAKAGVPVFAWKGESLEEYWWCTLQAVTHPGGKGPQLVVDDGGDVTLLIHKGYELENGSDWVNTPSGSHEEKVIKDLLKQVHAEDPQRWHKMVAEWRGVSEETTTGVHRLYKMQEQGKLLVPAINVNDSVTKSKFDNLYGCRESLADGIKRATDVMVAGKVAVICGYGDVGKGSAHSLRGMGARVIVTEIDPINALQAAMEGFEVTTIEDTLGRGDIYVTCTGNCEIITLEHMRLMKDQAIVCNIGHFDNEIQMDRLNESDAKRLQIKPQVDMYTFPGGSSIFILAEGRLVNLGCATGHPSFVMSNSFANQTLAQLDLWKNKDTYKVGVYTLPKKLDEEVARLHLEKIGVKLTTLTPAQAEYLGVPVEGPYKPDHYRY.

Substrate-binding residues include Thr63, Asp138, and Glu199. Residue 200 to 202 (TTT) participates in NAD(+) binding. Positions 229 and 233 each coordinate substrate. Residues Asn234, 263-268 (GYGDVG), Glu286, Asn321, 342-344 (IGH), and Asn389 contribute to the NAD(+) site.

Belongs to the adenosylhomocysteinase family. NAD(+) serves as cofactor.

Its subcellular location is the cytoplasm. The catalysed reaction is S-adenosyl-L-homocysteine + H2O = L-homocysteine + adenosine. The protein operates within amino-acid biosynthesis; L-homocysteine biosynthesis; L-homocysteine from S-adenosyl-L-homocysteine: step 1/1. Its function is as follows. May play a key role in the regulation of the intracellular concentration of adenosylhomocysteine. This chain is Adenosylhomocysteinase, found in Solibacter usitatus (strain Ellin6076).